The chain runs to 454 residues: Noelin-2 (454 aa).

An N-terminal signal peptide occupies residues 1–20 (MWPLTVPPPLLLLLCSGLAG). 2 coiled-coil regions span residues 58 to 85 (RDGRSRELRQLMEKVQNVSQSMEVLELR) and 136 to 193 (LEQY…AQKL). N-linked (GlcNAc...) asparagine glycosylation is found at N74, N155, N275, N310, N399, and N441. One can recognise an Olfactomedin-like domain in the interval 194-446 (GCGKLTGVSN…QVLYNVTLFH (253 aa)). Residues C195 and C377 are joined by a disulfide bond.

As to quaternary structure, peripherally associated with AMPAR complex. AMPAR complex consists of an inner core made of 4 pore-forming GluA/GRIA proteins (GRIA1, GRIA2, GRIA3 and GRIA4) and 4 major auxiliary subunits arranged in a twofold symmetry. One of the two pairs of distinct binding sites is occupied either by CNIH2, CNIH3 or CACNG2, CACNG3. The other harbors CACNG2, CACNG3, CACNG4, CACNG8 or GSG1L. This inner core of AMPAR complex is complemented by outer core constituents binding directly to the GluA/GRIA proteins at sites distinct from the interaction sites of the inner core constituents. Outer core constituents include at least PRRT1, PRRT2, CKAMP44/SHISA9, FRRS1L and NRN1. The proteins of the inner and outer core serve as a platform for other, more peripherally associated AMPAR constituents, including OLFM2. Alone or in combination, these auxiliary subunits control the gating and pharmacology of the AMPAR complex and profoundly impact their biogenesis and protein processing. Interacts with GRIA2. Interacts with OLFM1 and OLFM3. Interacts with SRF; the interaction promotes dissociation of SRF from the transcriptional repressor HEY2. Interacts with RUNX2. In terms of processing, N-glycosylated. As to expression, expressed in aortic smooth muscle (at protein level). In the fetus, expressed in the brain and ocular tissues including lens vesicle and optic cup.

Its subcellular location is the secreted. It is found in the synapse. It localises to the membrane. The protein resides in the nucleus. The protein localises to the cytoplasm. Functionally, involved in transforming growth factor beta (TGF-beta)-induced smooth muscle differentiation. TGF-beta induces expression and translocation of OLFM2 to the nucleus where it binds to SRF, causing its dissociation from the transcriptional repressor HEY2/HERP1 and facilitating binding of SRF to target genes. Plays a role in AMPAR complex organization. Is a regulator of vascular smooth-muscle cell (SMC) phenotypic switching, that acts by promoting RUNX2 and inhibiting MYOCD binding to SRF. SMC phenotypic switching is the process through which vascular SMCs undergo transition between a quiescent contractile phenotype and a proliferative synthetic phenotype in response to pathological stimuli. SMC phenotypic plasticity is essential for vascular development and remodeling. This chain is Noelin-2 (OLFM2), found in Homo sapiens (Human).